A 360-amino-acid chain; its full sequence is Terpene synthase 5 (360 aa).

The DDxx(x)D/E motif signature appears at 87–92 (DDFLER). Residues 237–245 (NDCVSYAKE) carry the NDxxSxxxD/E motif motif.

This sequence belongs to the terpene synthase family.

Its function is as follows. Terpene synthase that converts its substrate farnesyl diphosphate (FPP) into 2 yet unidentified sesquiterpenes. The sequence is that of Terpene synthase 5 from Dictyostelium purpureum (Slime mold).